A 464-amino-acid polypeptide reads, in one-letter code: 3-isopropylmalate dehydratase large subunit (464 aa).

3 residues coordinate [4Fe-4S] cluster: cysteine 337, cysteine 397, and cysteine 400.

It belongs to the aconitase/IPM isomerase family. LeuC type 1 subfamily. In terms of assembly, heterodimer of LeuC and LeuD. It depends on [4Fe-4S] cluster as a cofactor.

The catalysed reaction is (2R,3S)-3-isopropylmalate = (2S)-2-isopropylmalate. It functions in the pathway amino-acid biosynthesis; L-leucine biosynthesis; L-leucine from 3-methyl-2-oxobutanoate: step 2/4. Catalyzes the isomerization between 2-isopropylmalate and 3-isopropylmalate, via the formation of 2-isopropylmaleate. The chain is 3-isopropylmalate dehydratase large subunit from Bacillus cereus (strain 03BB102).